Here is a 265-residue protein sequence, read N- to C-terminus: Type III pantothenate kinase (265 aa).

9–16 (DAGNSRIK) contributes to the ATP binding site. Residues tyrosine 96 and 103-106 (GSDR) contribute to the substrate site. Catalysis depends on aspartate 105, which acts as the Proton acceptor. Threonine 129 contributes to the ATP binding site. Position 189 (threonine 189) interacts with substrate.

Belongs to the type III pantothenate kinase family. Homodimer. It depends on NH4(+) as a cofactor. The cofactor is K(+).

It localises to the cytoplasm. The enzyme catalyses (R)-pantothenate + ATP = (R)-4'-phosphopantothenate + ADP + H(+). Its pathway is cofactor biosynthesis; coenzyme A biosynthesis; CoA from (R)-pantothenate: step 1/5. Its function is as follows. Catalyzes the phosphorylation of pantothenate (Pan), the first step in CoA biosynthesis. The sequence is that of Type III pantothenate kinase from Burkholderia orbicola (strain AU 1054).